Consider the following 682-residue polypeptide: Pesticidal crystal protein Cry19Ba (682 aa).

The protein belongs to the delta endotoxin family.

Functionally, promotes colloidosmotic lysis by binding to the midgut epithelial cells of mosquitos. Has larvicidal activity against Culex pipiens molestus, but not to Anopheles stephensi. This Bacillus thuringiensis subsp. higo protein is Pesticidal crystal protein Cry19Ba.